Here is a 204-residue protein sequence, read N- to C-terminus: LexA repressor (204 aa).

The H-T-H motif DNA-binding region spans 28-48; it reads RAEIANRLGFKSANAAEEHLK. Catalysis depends on for autocatalytic cleavage activity residues S121 and K158.

This sequence belongs to the peptidase S24 family. In terms of assembly, homodimer.

It catalyses the reaction Hydrolysis of Ala-|-Gly bond in repressor LexA.. Represses a number of genes involved in the response to DNA damage (SOS response), including recA and lexA. In the presence of single-stranded DNA, RecA interacts with LexA causing an autocatalytic cleavage which disrupts the DNA-binding part of LexA, leading to derepression of the SOS regulon and eventually DNA repair. The protein is LexA repressor of Shewanella frigidimarina (strain NCIMB 400).